The primary structure comprises 513 residues: 5-aminolevulinate synthase, erythroid-specific, mitochondrial (513 aa).

The N-terminal 18 residues, 1-18 (MAAFLRCPLLARHPPLAR), are a transit peptide targeting the mitochondrion. Arginine 98 lines the succinyl-CoA pocket. The pyridoxal 5'-phosphate site is built by cysteine 190 and phenylalanine 191. 2 residues coordinate succinyl-CoA: serine 212 and lysine 231. Pyridoxal 5'-phosphate contacts are provided by serine 264, histidine 292, and threonine 320. The active site involves lysine 323. Lysine 323 is modified (N6-(pyridoxal phosphate)lysine). Residues threonine 352 and threonine 353 each contribute to the pyridoxal 5'-phosphate site. Threonine 437 is a succinyl-CoA binding site.

It belongs to the class-II pyridoxal-phosphate-dependent aminotransferase family. In terms of assembly, homodimer. Pyridoxal 5'-phosphate is required as a cofactor. In terms of tissue distribution, erythroid-specific.

The protein localises to the mitochondrion inner membrane. The enzyme catalyses succinyl-CoA + glycine + H(+) = 5-aminolevulinate + CO2 + CoA. It participates in porphyrin-containing compound metabolism; protoporphyrin-IX biosynthesis; 5-aminolevulinate from glycine: step 1/1. Catalyzes the pyridoxal 5'-phosphate (PLP)-dependent condensation of succinyl-CoA and glycine to form aminolevulinic acid (ALA), with CoA and CO2 as by-products. Contributes significantly to heme formation during erythropoiesis. The chain is 5-aminolevulinate synthase, erythroid-specific, mitochondrial (ALAS2) from Gallus gallus (Chicken).